Consider the following 229-residue polypeptide: Endonuclease V (229 aa).

Residues aspartate 36 and aspartate 104 each coordinate Mg(2+).

The protein belongs to the endonuclease V family. Requires Mg(2+) as cofactor.

The protein localises to the cytoplasm. The catalysed reaction is Endonucleolytic cleavage at apurinic or apyrimidinic sites to products with a 5'-phosphate.. In terms of biological role, DNA repair enzyme involved in the repair of deaminated bases. Selectively cleaves double-stranded DNA at the second phosphodiester bond 3' to a deoxyinosine leaving behind the intact lesion on the nicked DNA. This Pectobacterium carotovorum subsp. carotovorum (strain PC1) protein is Endonuclease V.